The following is a 183-amino-acid chain: uncharacterized protein (183 aa).

Residues 7–23 (LFFTALCFGLTGCIAPP) form a helical membrane-spanning segment.

It localises to the membrane. This is an uncharacterized protein from Haemophilus influenzae (strain ATCC 51907 / DSM 11121 / KW20 / Rd).